The chain runs to 82 residues: Vejovine (82 aa).

Residues 1–22 form the signal peptide; it reads MNAKTLFVVFLIGMLVTEQVEA. The propeptide occupies 70–82; sequence MTLDEIVDAMYYD.

Belongs to the non-disulfide-bridged peptide (NDBP) superfamily. Long chain multifunctional peptide (group 2) family. In terms of tissue distribution, expressed by the venom gland.

The protein localises to the secreted. Its subcellular location is the target cell membrane. Functionally, displays significant potent antimicrobial activity against clinical isolates of Gram-negative multidrug resistant strains of E.coli, P.aeruginosa and A.baumanii with MIC values as low as 4.4 uM. Additionally, it displays low cytolytic and hemolytic activity against human erythrocytes reaching 50% hemolysis at 100 uM. This Vaejovis mexicanus (Mexican scorpion) protein is Vejovine.